The chain runs to 304 residues: Splicing factor U2af small subunit B (304 aa).

The C3H1-type 1 zinc finger occupies 12–40 (EKDRVNCPFYFKIGACRHGDRCSRLHNRP). One can recognise an RRM domain in the interval 44-146 (PTIVLANMYQ…RPIIVEYSPV (103 aa)). A C3H1-type 2 zinc finger spans residues 148 to 175 (DFREATCRQFEENSCNRGGYCNFMHVKQ). The span at 184-207 (LYGGRSRRSHGRSRSPSPRHRRGN) shows a compositional bias: basic residues. Residues 184–304 (LYGGRSRRSH…QWNREREEKP (121 aa)) form a disordered region. Over residues 208–220 (RDRDDFRRERDGY) the composition is skewed to basic and acidic residues. Gly residues predominate over residues 221-258 (RGGGDGYRGGGGGGGGDGYRGGDSYRGGGGGGRRGGGS). The span at 268–280 (RRRHGSPPRRARS) shows a compositional bias: basic residues. Over residues 281–304 (PVRESSEERRAKIEQWNREREEKP) the composition is skewed to basic and acidic residues.

Belongs to the splicing factor SR family.

It localises to the nucleus. Its function is as follows. Necessary for the splicing of pre-mRNA. This chain is Splicing factor U2af small subunit B (U2AF35B), found in Oryza sativa subsp. japonica (Rice).